The chain runs to 339 residues: Dual specificity protein phosphatase 12 (339 aa).

The residue at position 1 (M1) is an N-acetylmethionine. The segment at 1–25 is disordered; that stretch reads MLEAQGSNHGCERQAPTASPASSAG. The region spanning 26–170 is the Tyrosine-protein phosphatase domain; it reads HAVEVRPGLY…LKLYEAMGYE (145 aa). C114 serves as the catalytic Phosphocysteine intermediate. 115–120 serves as a coordination point for substrate; that stretch reads HAGVSR. S334 carries the phosphoserine modification.

It belongs to the protein-tyrosine phosphatase family. Non-receptor class dual specificity subfamily. As to quaternary structure, monomer. It depends on Zn(2+) as a cofactor.

It localises to the nucleus. It is found in the cytoplasm. The protein resides in the cytosol. It catalyses the reaction O-phospho-L-tyrosyl-[protein] + H2O = L-tyrosyl-[protein] + phosphate. It carries out the reaction O-phospho-L-seryl-[protein] + H2O = L-seryl-[protein] + phosphate. The enzyme catalyses O-phospho-L-threonyl-[protein] + H2O = L-threonyl-[protein] + phosphate. Its function is as follows. Dual specificity phosphatase; can dephosphorylate both phosphotyrosine and phosphoserine or phosphothreonine residues. Can dephosphorylate glucokinase (in vitro). Has phosphatase activity with the synthetic substrate 6,8-difluoro-4-methylumbelliferyl phosphate and other in vitro substrates. The chain is Dual specificity protein phosphatase 12 (Dusp12) from Mus musculus (Mouse).